The sequence spans 132 residues: uncharacterized protein (132 aa).

2 disordered regions span residues 36-69 (GLAS…PNIS) and 97-132 (QIND…PTAR). A Phosphoserine modification is found at Ser101.

Copurifies with proteins HOL1, MMP1, PEX7 and PLB1.

This is an uncharacterized protein from Saccharomyces cerevisiae (strain ATCC 204508 / S288c) (Baker's yeast).